The primary structure comprises 242 residues: Dickkopf-like protein 1 (242 aa).

The first 30 residues, 1–30 (MGEASPPAPARRHLLVLLLLLSTLVIPSAA), serve as a signal peptide directing secretion. Asn-97 and Asn-112 each carry an N-linked (GlcNAc...) asparagine glycan.

In terms of assembly, interacts with SLXL1; Co-localize in seminiferous tubules. Interacts with SLY. In terms of processing, N-glycosylated during spermatogenesis. Not N-glycosylated in mature sperm. In terms of tissue distribution, more highly expressed in adult testis than in fetal testis. Exclusively expressed in the testis (at protein level). Intense expression in stages II, III and IV of spermatogenesis, whereas expression is lower in stage I.

The protein localises to the secreted. It is found in the cytoplasmic vesicle. Its subcellular location is the secretory vesicle. It localises to the acrosome. Involved in fertilization by facilitating sperm penetration of the zona pellucida. May promote spermatocyte apoptosis, thereby limiting sperm production. In adults, may reduce testosterone synthesis in Leydig cells. Is not essential either for development or fertility. In Homo sapiens (Human), this protein is Dickkopf-like protein 1.